Here is a 423-residue protein sequence, read N- to C-terminus: Acetylornithine aminotransferase, mitochondrial (423 aa).

The transit peptide at 1–13 (MFKRYLSSTSSRR) directs the protein to the mitochondrion. Lys276 carries the post-translational modification N6-(pyridoxal phosphate)lysine.

Belongs to the class-III pyridoxal-phosphate-dependent aminotransferase family. Requires pyridoxal 5'-phosphate as cofactor.

Its subcellular location is the mitochondrion matrix. It carries out the reaction N(2)-acetyl-L-ornithine + 2-oxoglutarate = N-acetyl-L-glutamate 5-semialdehyde + L-glutamate. It functions in the pathway amino-acid biosynthesis; L-arginine biosynthesis; N(2)-acetyl-L-ornithine from L-glutamate: step 4/4. Catalyzes the conversion of N-acetylglutamate-gamma-semialdehyde (NAGSA) to N-acetylornithine in arginine biosynthesis. The sequence is that of Acetylornithine aminotransferase, mitochondrial (ARG8) from Saccharomyces cerevisiae (strain ATCC 204508 / S288c) (Baker's yeast).